Reading from the N-terminus, the 124-residue chain is Ragulator complex protein LAMTOR3 (124 aa).

The segment at 57 to 70 (TDQGSKLGLSKNKS) is required for interaction with LAMTOR2.

Belongs to the LAMTOR3 family. As to quaternary structure, part of the Ragulator complex composed of LAMTOR1, LAMTOR2, LAMTOR3, LAMTOR4 and LAMTOR5. LAMTOR4 and LAMTOR5 form a heterodimer that interacts, through LAMTOR1, with a LAMTOR2, LAMTOR3 heterodimer. The Ragulator complex interacts with both the mTORC1 complex and heterodimers constituted of the Rag GTPases RagA/RRAGA, RagB/RRAGB, RagC/RRAGC and RagD/RRAGD; regulated by amino acid availability. The Ragulator complex interacts with SLC38A9; the probable amino acid sensor. Interacts with LAMTOR1 and LAMTOR2; the interaction is direct. Component of the lysosomal folliculin complex (LFC), composed of FLCN, FNIP1 (or FNIP2), RagA/RRAGA or RagB/RRAGB GDP-bound, RagC/RRAGC or RagD/RRAGD GTP-bound, and Ragulator. Interacts with MAP2K1/MEK1 and MAPK2. Interacts with MORG1.

Its subcellular location is the late endosome membrane. As part of the Ragulator complex it is involved in amino acid sensing and activation of mTORC1, a signaling complex promoting cell growth in response to growth factors, energy levels, and amino acids. Activated by amino acids through a mechanism involving the lysosomal V-ATPase, the Ragulator plays a dual role for the small GTPases Rag (RagA/RRAGA, RagB/RRAGB, RagC/RRAGC and/or RagD/RRAGD): it (1) acts as a guanine nucleotide exchange factor (GEF), activating the small GTPases Rag and (2) mediates recruitment of Rag GTPases to the lysosome membrane. Activated Ragulator and Rag GTPases function as a scaffold recruiting mTORC1 to lysosomes where it is in turn activated. Adapter protein that enhances the efficiency of the MAP kinase cascade facilitating the activation of MAPK2. This chain is Ragulator complex protein LAMTOR3 (Lamtor3), found in Mus musculus (Mouse).